The sequence spans 182 residues: Crossover junction endodeoxyribonuclease RuvC (182 aa).

Active-site residues include Asp-7, Glu-67, and Asp-139. Residues Asp-7, Glu-67, and Asp-139 each contribute to the Mg(2+) site.

It belongs to the RuvC family. In terms of assembly, homodimer which binds Holliday junction (HJ) DNA. The HJ becomes 2-fold symmetrical on binding to RuvC with unstacked arms; it has a different conformation from HJ DNA in complex with RuvA. In the full resolvosome a probable DNA-RuvA(4)-RuvB(12)-RuvC(2) complex forms which resolves the HJ. The cofactor is Mg(2+).

Its subcellular location is the cytoplasm. The catalysed reaction is Endonucleolytic cleavage at a junction such as a reciprocal single-stranded crossover between two homologous DNA duplexes (Holliday junction).. Functionally, the RuvA-RuvB-RuvC complex processes Holliday junction (HJ) DNA during genetic recombination and DNA repair. Endonuclease that resolves HJ intermediates. Cleaves cruciform DNA by making single-stranded nicks across the HJ at symmetrical positions within the homologous arms, yielding a 5'-phosphate and a 3'-hydroxyl group; requires a central core of homology in the junction. The consensus cleavage sequence is 5'-(A/T)TT(C/G)-3'. Cleavage occurs on the 3'-side of the TT dinucleotide at the point of strand exchange. HJ branch migration catalyzed by RuvA-RuvB allows RuvC to scan DNA until it finds its consensus sequence, where it cleaves and resolves the cruciform DNA. This Bordetella pertussis (strain Tohama I / ATCC BAA-589 / NCTC 13251) protein is Crossover junction endodeoxyribonuclease RuvC.